The chain runs to 252 residues: Protein BTG3 (252 aa).

Residues 138 to 162 (VTSDYHSGSSSSDEDTSKEVEVKPS) form a disordered region.

This sequence belongs to the BTG family. As to expression, highly expressed in the brain.

In terms of biological role, overexpression impairs serum-induced cell cycle progression from the G0/G1 to S phase. The sequence is that of Protein BTG3 from Rattus norvegicus (Rat).